The sequence spans 111 residues: Fluoride-specific ion channel FluC (111 aa).

The next 3 helical transmembrane spans lie at 2 to 22, 36 to 56, and 71 to 91; these read GLLL…RFAL, GILL…AFLI, and FLLV…SLDI. Na(+)-binding residues include Gly-79 and Thr-82.

This sequence belongs to the fluoride channel Fluc/FEX (TC 1.A.43) family.

It localises to the cell inner membrane. It carries out the reaction fluoride(in) = fluoride(out). With respect to regulation, na(+) is not transported, but it plays an essential structural role and its presence is essential for fluoride channel function. Fluoride-specific ion channel. Important for reducing fluoride concentration in the cell, thus reducing its toxicity. This chain is Fluoride-specific ion channel FluC, found in Francisella tularensis subsp. holarctica (strain FTNF002-00 / FTA).